The chain runs to 565 residues: Putative ribonucleoside-diphosphate reductase large subunit (565 aa).

Substrate is bound by residues S60, 74–75 (SC), G103, 256–260 (NLCNE), and 400–404 (PNANS). C75 and C273 are oxidised to a cystine. N256 serves as the catalytic Proton acceptor. C258 (cysteine radical intermediate) is an active-site residue. Catalysis depends on E260, which acts as the Proton acceptor.

This sequence belongs to the ribonucleoside diphosphate reductase large chain family. As to quaternary structure, heterotetramer composed of a homodimer of the large subunit (R1) and a homodimer of the small subunit (R2). Larger multisubunit protein complex are also active, composed of (R1)n(R2)n.

The enzyme catalyses a 2'-deoxyribonucleoside 5'-diphosphate + [thioredoxin]-disulfide + H2O = a ribonucleoside 5'-diphosphate + [thioredoxin]-dithiol. Its activity is regulated as follows. Under complex allosteric control mediated by deoxynucleoside triphosphates and ATP binding. The type of nucleotide bound at the specificity site determines substrate preference. It seems probable that ATP makes the enzyme reduce CDP and UDP, dGTP favors ADP reduction and dTTP favors GDP reduction. Ribonucleoside-diphosphate reductase holoenzyme provides the precursors necessary for viral DNA synthesis. Allows virus growth in non-dividing cells. Catalyzes the biosynthesis of deoxyribonucleotides from the corresponding ribonucleotides. This Frog virus 3 (isolate Goorha) (FV-3) protein is Putative ribonucleoside-diphosphate reductase large subunit.